We begin with the raw amino-acid sequence, 325 residues long: Gibberellin 20-oxidase-like protein (325 aa).

The region spanning 152–266 (CHGYFRINNY…RFSLAFFWCF (115 aa)) is the Fe2OG dioxygenase domain. Fe cation is bound by residues H186, D188, and H244. R257 contacts 2-oxoglutarate.

Belongs to the iron/ascorbate-dependent oxidoreductase family. GA20OX subfamily. It depends on Fe(2+) as a cofactor. Highly expressed in elongation zone of lateral roots.

In terms of biological role, negative regulator of root hair growth. The sequence is that of Gibberellin 20-oxidase-like protein from Arabidopsis thaliana (Mouse-ear cress).